The chain runs to 158 residues: Cyclic pyranopterin monophosphate synthase (158 aa).

Substrate is bound by residues 76 to 78 (MCH) and 114 to 115 (ME). Aspartate 129 is an active-site residue.

Belongs to the MoaC family. As to quaternary structure, homohexamer; trimer of dimers.

The enzyme catalyses (8S)-3',8-cyclo-7,8-dihydroguanosine 5'-triphosphate = cyclic pyranopterin phosphate + diphosphate. Its pathway is cofactor biosynthesis; molybdopterin biosynthesis. Catalyzes the conversion of (8S)-3',8-cyclo-7,8-dihydroguanosine 5'-triphosphate to cyclic pyranopterin monophosphate (cPMP). The chain is Cyclic pyranopterin monophosphate synthase from Clostridium perfringens (strain SM101 / Type A).